The chain runs to 201 residues: Recombination protein RecR (201 aa).

The C4-type zinc finger occupies 57–72; it reads CADCRTFTEQEVCNIC. The region spanning 81–176 is the Toprim domain; that stretch reads GQICVVESPA…EASRIAHGVP (96 aa).

Belongs to the RecR family.

Its function is as follows. May play a role in DNA repair. It seems to be involved in an RecBC-independent recombinational process of DNA repair. It may act with RecF and RecO. The polypeptide is Recombination protein RecR (Salmonella arizonae (strain ATCC BAA-731 / CDC346-86 / RSK2980)).